The primary structure comprises 377 residues: uncharacterized protein (377 aa).

This is an uncharacterized protein from Bacillus subtilis (strain 168).